A 216-amino-acid polypeptide reads, in one-letter code: MKLTWIKCMRKTEKMNDIDEPRLFEETGIEAFVAALVIPLLKPLDFRLVRVKLLGQNGLTLQIMVERADGSMTIEDCETVSRTVSHLLDVQNVIERKYHLEISSPGIDRPLVRKSDFFHWQGHIAKIETKITIDGRKKFRGILANITQEGLTLNTDKAAYGEAMYIAIPFDNIIDAHLVLTDELIRNALKKNKDLSQQFISEDNPNVSKQLSNYKN.

The protein belongs to the RimP family.

It localises to the cytoplasm. Required for maturation of 30S ribosomal subunits. This chain is Ribosome maturation factor RimP, found in Bartonella quintana (strain Toulouse) (Rochalimaea quintana).